Reading from the N-terminus, the 289-residue chain is Glycine--tRNA ligase alpha subunit (289 aa).

Belongs to the class-II aminoacyl-tRNA synthetase family. Tetramer of two alpha and two beta subunits.

It is found in the cytoplasm. The enzyme catalyses tRNA(Gly) + glycine + ATP = glycyl-tRNA(Gly) + AMP + diphosphate. This is Glycine--tRNA ligase alpha subunit from Rickettsia akari (strain Hartford).